A 447-amino-acid chain; its full sequence is ATP-dependent protease ATPase subunit HslU (447 aa).

ATP is bound by residues Ile-18, 60–65 (GVGKTE), Asp-259, Glu-325, and Arg-397.

Belongs to the ClpX chaperone family. HslU subfamily. In terms of assembly, a double ring-shaped homohexamer of HslV is capped on each side by a ring-shaped HslU homohexamer. The assembly of the HslU/HslV complex is dependent on binding of ATP.

The protein resides in the cytoplasm. In terms of biological role, ATPase subunit of a proteasome-like degradation complex; this subunit has chaperone activity. The binding of ATP and its subsequent hydrolysis by HslU are essential for unfolding of protein substrates subsequently hydrolyzed by HslV. HslU recognizes the N-terminal part of its protein substrates and unfolds these before they are guided to HslV for hydrolysis. In Burkholderia ambifaria (strain ATCC BAA-244 / DSM 16087 / CCUG 44356 / LMG 19182 / AMMD) (Burkholderia cepacia (strain AMMD)), this protein is ATP-dependent protease ATPase subunit HslU.